Consider the following 180-residue polypeptide: Large ribosomal subunit protein uL5 (180 aa).

The protein belongs to the universal ribosomal protein uL5 family. Part of the 50S ribosomal subunit; part of the 5S rRNA/L5/L18/L25 subcomplex. Contacts the 5S rRNA and the P site tRNA. Forms a bridge to the 30S subunit in the 70S ribosome.

Its function is as follows. This is one of the proteins that bind and probably mediate the attachment of the 5S RNA into the large ribosomal subunit, where it forms part of the central protuberance. In the 70S ribosome it contacts protein S13 of the 30S subunit (bridge B1b), connecting the 2 subunits; this bridge is implicated in subunit movement. Contacts the P site tRNA; the 5S rRNA and some of its associated proteins might help stabilize positioning of ribosome-bound tRNAs. The chain is Large ribosomal subunit protein uL5 from Ralstonia pickettii (strain 12J).